Consider the following 483-residue polypeptide: Putative inorganic phosphate cotransporter (483 aa).

7 helical membrane passes run 64 to 84, 90 to 110, 187 to 207, 292 to 312, 349 to 369, 383 to 403, and 420 to 440; these read YILS…GILA, LRFL…VPVA, IFYV…IFVY, LPYL…DWMI, ALTL…YSGF, FLMS…PIAA, and IVFF…NIFG. Residues 447–483 are disordered; it reads WDNPSEDEQKPALESSSTTNPPRLSNGSSAPRAISSS. Polar residues predominate over residues 460 to 483; sequence ESSSTTNPPRLSNGSSAPRAISSS.

This sequence belongs to the major facilitator superfamily. Sodium/anion cotransporter family.

Its subcellular location is the membrane. Its function is as follows. May be an inorganic phosphate cotransporter. This Drosophila ananassae (Fruit fly) protein is Putative inorganic phosphate cotransporter (Picot).